Consider the following 172-residue polypeptide: Large ribosomal subunit protein bL17 (172 aa).

Residues 153-172 (AQAAEPVAAAEPATPATTAG) form a disordered region.

The protein belongs to the bacterial ribosomal protein bL17 family. In terms of assembly, part of the 50S ribosomal subunit. Contacts protein L32.

The chain is Large ribosomal subunit protein bL17 from Sorangium cellulosum (strain So ce56) (Polyangium cellulosum (strain So ce56)).